Reading from the N-terminus, the 353-residue chain is Immune-associated nucleotide-binding protein 8 (353 aa).

Polar residues predominate over residues 1 to 10 (MANDQKNSES). The segment at 1–43 (MANDQKNSESFPAKEDHKKDDAAAPAEVDHKDEFSASQPHPVE) is disordered. A compositionally biased stretch (basic and acidic residues) spans 12-34 (PAKEDHKKDDAAAPAEVDHKDEF). Residues 40–248 (HPVENIVLVG…YTDEMYHMIK (209 aa)) enclose the AIG1-type G domain. The G1 stretch occupies residues 49 to 56 (GRTGNGKS). GTP-binding positions include 49–57 (GRTGNGKSA) and Ser70. The segment at 76-80 (GVTME) is G2. The tract at residues 98 to 101 (DTPG) is G3. Residues 168–171 (TGGD) are G4. The G5 stretch occupies residues 207 to 209 (DNK). Residue Asn208 coordinates GTP. Positions 244–291 (YHMIKEENERHKKEQEELESKGHSEEQLAALMKELQIMNERNLKAMAE) form a coiled coil.

The protein belongs to the TRAFAC class TrmE-Era-EngA-EngB-Septin-like GTPase superfamily. AIG1/Toc34/Toc159-like paraseptin GTPase family. IAN subfamily. In terms of tissue distribution, mainly expressed in leaves.

This is Immune-associated nucleotide-binding protein 8 from Arabidopsis thaliana (Mouse-ear cress).